Here is a 425-residue protein sequence, read N- to C-terminus: Enolase (425 aa).

Gln-163 contacts (2R)-2-phosphoglycerate. Catalysis depends on Glu-205, which acts as the Proton donor. Residues Asp-242, Glu-285, and Asp-312 each contribute to the Mg(2+) site. Lys-337, Arg-366, Ser-367, and Lys-388 together coordinate (2R)-2-phosphoglycerate. Lys-337 functions as the Proton acceptor in the catalytic mechanism.

This sequence belongs to the enolase family. Mg(2+) serves as cofactor.

The protein resides in the cytoplasm. The protein localises to the secreted. It localises to the cell surface. The enzyme catalyses (2R)-2-phosphoglycerate = phosphoenolpyruvate + H2O. It functions in the pathway carbohydrate degradation; glycolysis; pyruvate from D-glyceraldehyde 3-phosphate: step 4/5. Its function is as follows. Catalyzes the reversible conversion of 2-phosphoglycerate (2-PG) into phosphoenolpyruvate (PEP). It is essential for the degradation of carbohydrates via glycolysis. This Ruegeria pomeroyi (strain ATCC 700808 / DSM 15171 / DSS-3) (Silicibacter pomeroyi) protein is Enolase.